The primary structure comprises 75 residues: Protein Tlp homolog (75 aa).

Residues 53–75 (REALDGMREEIKDEARDKKNGYM) form a disordered region.

The protein belongs to the Tlp family.

The sequence is that of Protein Tlp homolog from Clostridium botulinum (strain Langeland / NCTC 10281 / Type F).